Consider the following 123-residue polypeptide: WAP four-disulfide core domain protein 5 (123 aa).

Positions 1 to 24 (MRIQSLLLLGVLLAVGSQLPAAFG) are cleaved as a signal peptide. WAP domains follow at residues 27 to 73 (KGEK…CVPR) and 74 to 121 (ISVK…RDPA). Disulfide bonds link cysteine 34–cysteine 62, cysteine 41–cysteine 66, cysteine 49–cysteine 61, cysteine 55–cysteine 70, cysteine 81–cysteine 109, cysteine 88–cysteine 113, cysteine 96–cysteine 108, and cysteine 102–cysteine 117.

It localises to the secreted. In terms of biological role, putative acid-stable proteinase inhibitor. The sequence is that of WAP four-disulfide core domain protein 5 (WFDC5) from Callithrix jacchus (White-tufted-ear marmoset).